Reading from the N-terminus, the 451-residue chain is Adenylosuccinate synthetase isozyme 2 (451 aa).

GTP contacts are provided by residues 34–40 and 62–64; these read GDEGKGK and GHT. The active-site Proton acceptor is Asp35. Mg(2+)-binding residues include Asp35 and Gly62. Residue Asp35 coordinates substrate. IMP contacts are provided by residues 35–38, 60–63, Thr157, Arg171, Asn250, Thr265, and Arg329; these read DEGK and NAGH. His63 serves as the catalytic Proton donor. Residue 325–331 coordinates substrate; sequence VTTGRKR. Residues Arg331, 357–359, and 439–442 contribute to the GTP site; these read KLD and GVGK.

The protein belongs to the adenylosuccinate synthetase family. As to quaternary structure, homodimer. It depends on Mg(2+) as a cofactor.

The protein localises to the cytoplasm. It is found in the mitochondrion. The enzyme catalyses IMP + L-aspartate + GTP = N(6)-(1,2-dicarboxyethyl)-AMP + GDP + phosphate + 2 H(+). It participates in purine metabolism; AMP biosynthesis via de novo pathway; AMP from IMP: step 1/2. Its activity is regulated as follows. Inhibited competitively by AMP and IMP and non-competitively by fructose 1,6-bisphosphate. Plays an important role in the de novo pathway and in the salvage pathway of purine nucleotide biosynthesis. Catalyzes the first committed step in the biosynthesis of AMP from IMP. This is Adenylosuccinate synthetase isozyme 2 from Gallus gallus (Chicken).